Consider the following 297-residue polypeptide: Acetylglutamate kinase (297 aa).

Residues 68 to 69 (GG), Arg90, and Asn195 contribute to the substrate site.

It belongs to the acetylglutamate kinase family. ArgB subfamily.

The protein localises to the cytoplasm. The enzyme catalyses N-acetyl-L-glutamate + ATP = N-acetyl-L-glutamyl 5-phosphate + ADP. It participates in amino-acid biosynthesis; L-arginine biosynthesis; N(2)-acetyl-L-ornithine from L-glutamate: step 2/4. Its function is as follows. Catalyzes the ATP-dependent phosphorylation of N-acetyl-L-glutamate. This chain is Acetylglutamate kinase, found in Mesorhizobium japonicum (strain LMG 29417 / CECT 9101 / MAFF 303099) (Mesorhizobium loti (strain MAFF 303099)).